The chain runs to 53 residues: Large ribosomal subunit protein eL24 (53 aa).

Residues C4, C7, C30, and C34 each contribute to the Zn(2+) site. The C4-type zinc finger occupies 4–34 (CSFCHEEIEPGTGKMYVKRDGTIYFFCSSKC).

The protein belongs to the eukaryotic ribosomal protein eL24 family. Part of the 50S ribosomal subunit. Forms a cluster with proteins L3 and L14. Zn(2+) serves as cofactor.

In terms of biological role, binds to the 23S rRNA. This chain is Large ribosomal subunit protein eL24, found in Methanothermobacter thermautotrophicus (strain ATCC 29096 / DSM 1053 / JCM 10044 / NBRC 100330 / Delta H) (Methanobacterium thermoautotrophicum).